Consider the following 257-residue polypeptide: Undecaprenyl-diphosphatase (257 aa).

8 helical membrane-spanning segments follow: residues 4–24 (LIRV…PISS), 41–61 (SVTL…VVFW), 74–94 (VIGL…TIKT), 103–123 (PLLA…LGRL), 133–153 (LGLG…LPGI), 173–193 (SVTF…VLAI), 209–229 (VLSI…KWLI), and 236–256 (RLHW…LLNL).

It belongs to the UppP family.

Its subcellular location is the cell inner membrane. The catalysed reaction is di-trans,octa-cis-undecaprenyl diphosphate + H2O = di-trans,octa-cis-undecaprenyl phosphate + phosphate + H(+). Its function is as follows. Catalyzes the dephosphorylation of undecaprenyl diphosphate (UPP). Confers resistance to bacitracin. This chain is Undecaprenyl-diphosphatase, found in Rhodopirellula baltica (strain DSM 10527 / NCIMB 13988 / SH1).